The chain runs to 539 residues: 3-methylmercaptopropionyl-CoA ligase (539 aa).

T185 lines the Mg(2+) pocket. Positions 231, 303, 324, 325, and 329 each coordinate ATP. E330 is a binding site for Mg(2+). Positions 359, 417, 432, and 523 each coordinate ATP.

Belongs to the ATP-dependent AMP-binding enzyme family. In terms of assembly, homodimer. Mg(2+) is required as a cofactor.

It carries out the reaction 3-(methylsulfanyl)propanoate + ATP + CoA = 3-(methylsulfanyl)propanoyl-CoA + AMP + diphosphate. Its activity is regulated as follows. ADP acts as a competitive inhibitor and inhibits the ligase activity. Its function is as follows. Involved in the assimilation of dimethylsulphoniopropionate (DMSP), an important compound in the fixation of carbon in marine phytoplankton. Catalyzes the ATP-dependent ligation of methylmercaptopropionate (MMPA) and CoA to yield methylmercaptopropionate-CoA (MMPA-CoA). This is 3-methylmercaptopropionyl-CoA ligase from Ruegeria lacuscaerulensis (strain DSM 11314 / KCTC 2953 / ITI-1157) (Silicibacter lacuscaerulensis).